A 56-amino-acid polypeptide reads, in one-letter code: Male determiner protein Yob (56 aa).

Its function is as follows. Male determiner protein (M-factor) that controls male somatic sexual differentiation. Acts as a dominant factor that regulates the mRNA splicing of doublesex (dsx) transcripts and promotes expression of male splice forms of dsx. In Anopheles gambiae (African malaria mosquito), this protein is Male determiner protein Yob.